We begin with the raw amino-acid sequence, 647 residues long: LIM domain kinase 1 (647 aa).

LIM zinc-binding domains are found at residues C25 to D75 and C84 to C137. Residues L165–P258 form the PDZ domain. Residue S210 is modified to Phosphoserine. T229 carries the phosphothreonine modification. Residues H256–K316 form a disordered region. Residues H278–R289 are compositionally biased toward polar residues. S298, S302, S307, and S310 each carry phosphoserine. Phosphoserine; by MAPKAPK2 is present on S323. S337 is subject to Phosphoserine. Positions L339–L604 constitute a Protein kinase domain. Residues L345–A353 and K368 contribute to the ATP site. D460 is a catalytic residue. At T508 the chain carries Phosphothreonine; by ROCK1 and PAK1.

The protein belongs to the protein kinase superfamily. TKL Ser/Thr protein kinase family. In terms of assembly, interacts (via LIM domain) with the cytoplasmic domain of NRG1. Interacts with NISCH. Interacts with RLIM and RNF6. Self-associates to form homodimers. Interacts with HSP90AA1; this interaction promotes LIMK1 dimerization and subsequent transphosphorylation. Interacts with CDKN1C. Interacts with SSH1. Interacts with ROCK1. Interacts (via LIM zinc-binding domains) with FAM89B/LRAP25 (via LRR repeat). Forms a tripartite complex with CDC42BPA, CDC42BPB and FAM89B/LRAP25. In terms of processing, autophosphorylated. Phosphorylated on Thr-508 by ROCK1 and PAK1, resulting in activation. Phosphorylated by PAK4 which increases the ability of LIMK1 to phosphorylate cofilin. Phosphorylated at Ser-323 by MAPKAPK2 during activation of VEGFA-induced signaling, which results in activation of LIMK1 and promotion of actin reorganization, cell migration, and tubule formation of endothelial cells. Dephosphorylated and inactivated by SSH1. Phosphorylated by CDC42BP. Ubiquitinated. 'Lys-48'-linked polyubiquitination by RNF6 leads to proteasomal degradation through the 26S proteasome, modulating LIMK1 levels in the growth cone and its effect on axonal outgrowth. Also polyubiquitinated by RLIM.

The protein localises to the cytoplasm. It is found in the nucleus. It localises to the cytoskeleton. The protein resides in the cell projection. Its subcellular location is the lamellipodium. It catalyses the reaction L-seryl-[protein] + ATP = O-phospho-L-seryl-[protein] + ADP + H(+). The enzyme catalyses L-threonyl-[protein] + ATP = O-phospho-L-threonyl-[protein] + ADP + H(+). Functionally, serine/threonine-protein kinase that plays an essential role in the regulation of actin filament dynamics. Acts downstream of several Rho family GTPase signal transduction pathways. Activated by upstream kinases including ROCK1, PAK1 and PAK4, which phosphorylate LIMK1 on a threonine residue located in its activation loop. LIMK1 subsequently phosphorylates and inactivates the actin binding/depolymerizing factors cofilin-1/CFL1, cofilin-2/CFL2 and destrin/DSTN, thereby preventing the cleavage of filamentous actin (F-actin), and stabilizing the actin cytoskeleton. In this way LIMK1 regulates several actin-dependent biological processes including cell motility, cell cycle progression, and differentiation. Phosphorylates TPPP on serine residues, thereby promoting microtubule disassembly. Stimulates axonal outgrowth and may be involved in brain development. This chain is LIM domain kinase 1 (Limk1), found in Rattus norvegicus (Rat).